Reading from the N-terminus, the 100-residue chain is Urease subunit gamma (100 aa).

Belongs to the urease gamma subunit family. As to quaternary structure, heterotrimer of UreA (gamma), UreB (beta) and UreC (alpha) subunits. Three heterotrimers associate to form the active enzyme.

It is found in the cytoplasm. The catalysed reaction is urea + 2 H2O + H(+) = hydrogencarbonate + 2 NH4(+). The protein operates within nitrogen metabolism; urea degradation; CO(2) and NH(3) from urea (urease route): step 1/1. This is Urease subunit gamma from Thermosynechococcus vestitus (strain NIES-2133 / IAM M-273 / BP-1).